A 272-amino-acid chain; its full sequence is Acyl-[acyl-carrier-protein]--UDP-N-acetylglucosamine O-acyltransferase (272 aa).

Belongs to the transferase hexapeptide repeat family. LpxA subfamily. As to quaternary structure, homotrimer.

The protein localises to the cytoplasm. It catalyses the reaction a (3R)-hydroxyacyl-[ACP] + UDP-N-acetyl-alpha-D-glucosamine = a UDP-3-O-[(3R)-3-hydroxyacyl]-N-acetyl-alpha-D-glucosamine + holo-[ACP]. Its pathway is glycolipid biosynthesis; lipid IV(A) biosynthesis; lipid IV(A) from (3R)-3-hydroxytetradecanoyl-[acyl-carrier-protein] and UDP-N-acetyl-alpha-D-glucosamine: step 1/6. In terms of biological role, involved in the biosynthesis of lipid A, a phosphorylated glycolipid that anchors the lipopolysaccharide to the outer membrane of the cell. The chain is Acyl-[acyl-carrier-protein]--UDP-N-acetylglucosamine O-acyltransferase from Rhizobium leguminosarum bv. trifolii (strain WSM2304).